The following is a 172-amino-acid chain: R-phycocyanin-2 beta chain (172 aa).

The residue at position 72 (Asn72) is an N4-methylasparagine. Cys82 serves as a coordination point for (2R,3E)-phycocyanobilin. Cys153 lines the (2R,3E)-phycoerythrobilin pocket.

Belongs to the phycobiliprotein family. As to quaternary structure, heterodimer of an alpha and a beta chain. In terms of processing, contains two covalently linked bilin chromophores.

Its subcellular location is the cellular thylakoid membrane. Functionally, light-harvesting photosynthetic bile pigment-protein from the phycobiliprotein complex. The polypeptide is R-phycocyanin-2 beta chain (rpcB) (Synechococcus sp. (strain WH8103)).